We begin with the raw amino-acid sequence, 156 residues long: MQLLIVAVGHKMPSWIEEGFSEYAKRMPPELRIELREIKPEQRSGSRTAATVMQLEAARIEAALPKGCRMIALDERGKDLTTVALAESLTGWQQEGGDIAFVIGGADGLDPALKAKARTLIRLSSLTLPHGMVRVLLAEQLYRAWSITQNHPYHRV.

S-adenosyl-L-methionine is bound by residues Leu-73, Gly-104, and 123–128; that span reads LSSLTL.

The protein belongs to the RNA methyltransferase RlmH family. Homodimer.

The protein localises to the cytoplasm. It carries out the reaction pseudouridine(1915) in 23S rRNA + S-adenosyl-L-methionine = N(3)-methylpseudouridine(1915) in 23S rRNA + S-adenosyl-L-homocysteine + H(+). In terms of biological role, specifically methylates the pseudouridine at position 1915 (m3Psi1915) in 23S rRNA. The protein is Ribosomal RNA large subunit methyltransferase H of Ralstonia pickettii (strain 12J).